A 279-amino-acid chain; its full sequence is Protease HtpX homolog (279 aa).

The next 2 membrane-spanning stretches (helical) occupy residues 6 to 26 (TVAL…MMGG) and 28 to 48 (GGAL…YWFS). Position 127 (histidine 127) interacts with Zn(2+). Glutamate 128 is a catalytic residue. Zn(2+) is bound at residue histidine 131. 2 helical membrane passes run 137-157 (ILIG…AHMA) and 177-197 (LGLL…QMAI). Glutamate 202 lines the Zn(2+) pocket.

This sequence belongs to the peptidase M48B family. It depends on Zn(2+) as a cofactor.

The protein localises to the cell inner membrane. The chain is Protease HtpX homolog from Syntrophotalea carbinolica (strain DSM 2380 / NBRC 103641 / GraBd1) (Pelobacter carbinolicus).